Here is a 332-residue protein sequence, read N- to C-terminus: Biotin synthase (332 aa).

Residues 53–282 (YFGKKVKLNM…TKEIRISGGR (230 aa)) form the Radical SAM core domain. C71, C75, and C78 together coordinate [4Fe-4S] cluster. Residues C115, C147, C207, and R277 each coordinate [2Fe-2S] cluster.

Belongs to the radical SAM superfamily. Biotin synthase family. In terms of assembly, homodimer. [4Fe-4S] cluster serves as cofactor. It depends on [2Fe-2S] cluster as a cofactor.

It carries out the reaction (4R,5S)-dethiobiotin + (sulfur carrier)-SH + 2 reduced [2Fe-2S]-[ferredoxin] + 2 S-adenosyl-L-methionine = (sulfur carrier)-H + biotin + 2 5'-deoxyadenosine + 2 L-methionine + 2 oxidized [2Fe-2S]-[ferredoxin]. Its pathway is cofactor biosynthesis; biotin biosynthesis; biotin from 7,8-diaminononanoate: step 2/2. Functionally, catalyzes the conversion of dethiobiotin (DTB) to biotin by the insertion of a sulfur atom into dethiobiotin via a radical-based mechanism. The sequence is that of Biotin synthase from Bacillus anthracis.